We begin with the raw amino-acid sequence, 441 residues long: Glutamate--tRNA ligase 1 (441 aa).

Residues 8-18 (PSPTGHIHVGN) carry the 'HIGH' region motif. The 'KMSKS' region motif lies at 239–243 (ELSKR). Lys242 contributes to the ATP binding site.

The protein belongs to the class-I aminoacyl-tRNA synthetase family. Glutamate--tRNA ligase type 1 subfamily. Monomer.

The protein localises to the cytoplasm. The catalysed reaction is tRNA(Glu) + L-glutamate + ATP = L-glutamyl-tRNA(Glu) + AMP + diphosphate. Catalyzes the attachment of glutamate to tRNA(Glu) in a two-step reaction: glutamate is first activated by ATP to form Glu-AMP and then transferred to the acceptor end of tRNA(Glu). This chain is Glutamate--tRNA ligase 1, found in Paracoccus denitrificans (strain Pd 1222).